The primary structure comprises 801 residues: PR domain zinc finger protein 4 (801 aa).

In terms of domain architecture, SET spans 412 to 529; the sequence is KQLVLRQSIV…PENELLFYYS (118 aa). The C2H2-type 1; atypical zinc-finger motif lies at 545–566; the sequence is HLCNCGKECNSYTEFKAHLTSH. C2H2-type zinc fingers lie at residues 618 to 640, 646 to 668, 674 to 696, and 702 to 724; these read HKCD…LKIH, YRCT…MVIH, LKCD…VLIH, and IKCP…LNSH. Residues 730 to 752 form a C2H2-type 6; atypical zinc finger; the sequence is YVCEKCTKAYLTKYHLTRHLKTC. The segment at 751–782 is disordered; sequence TCKGPTSSSSAPEEEEEDDSEEEDLADSVGTE. Acidic residues predominate over residues 762–776; the sequence is PEEEEEDDSEEEDLA.

It belongs to the class V-like SAM-binding methyltransferase superfamily.

Its subcellular location is the nucleus. In terms of biological role, may function as a transcription factor involved in cell differentiation. This chain is PR domain zinc finger protein 4 (PRDM4), found in Pongo abelii (Sumatran orangutan).